Reading from the N-terminus, the 273-residue chain is Putative phosphoenolpyruvate synthase regulatory protein (273 aa).

153 to 160 (GVSRSGKT) is an ADP binding site.

This sequence belongs to the pyruvate, phosphate/water dikinase regulatory protein family. PSRP subfamily.

It catalyses the reaction [pyruvate, water dikinase] + ADP = [pyruvate, water dikinase]-phosphate + AMP + H(+). The enzyme catalyses [pyruvate, water dikinase]-phosphate + phosphate + H(+) = [pyruvate, water dikinase] + diphosphate. Functionally, bifunctional serine/threonine kinase and phosphorylase involved in the regulation of the phosphoenolpyruvate synthase (PEPS) by catalyzing its phosphorylation/dephosphorylation. This chain is Putative phosphoenolpyruvate synthase regulatory protein, found in Albidiferax ferrireducens (strain ATCC BAA-621 / DSM 15236 / T118) (Rhodoferax ferrireducens).